We begin with the raw amino-acid sequence, 319 residues long: Lipoyl synthase (319 aa).

The segment at 1 to 24 is disordered; it reads MAVVIDTVGARPRHPEKQANPDTP. Over residues 13 to 24 the composition is skewed to basic and acidic residues; the sequence is RHPEKQANPDTP. Residues Cys-58, Cys-63, Cys-69, Cys-84, Cys-88, Cys-91, and Ser-298 each contribute to the [4Fe-4S] cluster site. The Radical SAM core domain maps to 70–287; that stretch reads WDKSHATFMI…EEIARAKGFL (218 aa).

It belongs to the radical SAM superfamily. Lipoyl synthase family. The cofactor is [4Fe-4S] cluster.

It is found in the cytoplasm. The catalysed reaction is [[Fe-S] cluster scaffold protein carrying a second [4Fe-4S](2+) cluster] + N(6)-octanoyl-L-lysyl-[protein] + 2 oxidized [2Fe-2S]-[ferredoxin] + 2 S-adenosyl-L-methionine + 4 H(+) = [[Fe-S] cluster scaffold protein] + N(6)-[(R)-dihydrolipoyl]-L-lysyl-[protein] + 4 Fe(3+) + 2 hydrogen sulfide + 2 5'-deoxyadenosine + 2 L-methionine + 2 reduced [2Fe-2S]-[ferredoxin]. It functions in the pathway protein modification; protein lipoylation via endogenous pathway; protein N(6)-(lipoyl)lysine from octanoyl-[acyl-carrier-protein]: step 2/2. Catalyzes the radical-mediated insertion of two sulfur atoms into the C-6 and C-8 positions of the octanoyl moiety bound to the lipoyl domains of lipoate-dependent enzymes, thereby converting the octanoylated domains into lipoylated derivatives. This is Lipoyl synthase from Phenylobacterium zucineum (strain HLK1).